We begin with the raw amino-acid sequence, 370 residues long: tRNA-specific 2-thiouridylase MnmA (370 aa).

Residues 11–18 and Met37 each bind ATP; that span reads GMSGGVDS. Residues 97–99 form an interaction with target base in tRNA region; sequence NPD. Cys102 (nucleophile) is an active-site residue. A disulfide bridge connects residues Cys102 and Cys199. Position 126 (Gly126) interacts with ATP. Positions 149-151 are interaction with tRNA; the sequence is KDQ. The active-site Cysteine persulfide intermediate is the Cys199. Positions 307-308 are interaction with tRNA; that stretch reads RY.

It belongs to the MnmA/TRMU family.

The protein resides in the cytoplasm. It carries out the reaction S-sulfanyl-L-cysteinyl-[protein] + uridine(34) in tRNA + AH2 + ATP = 2-thiouridine(34) in tRNA + L-cysteinyl-[protein] + A + AMP + diphosphate + H(+). Catalyzes the 2-thiolation of uridine at the wobble position (U34) of tRNA, leading to the formation of s(2)U34. This chain is tRNA-specific 2-thiouridylase MnmA, found in Staphylococcus saprophyticus subsp. saprophyticus (strain ATCC 15305 / DSM 20229 / NCIMB 8711 / NCTC 7292 / S-41).